The following is a 445-amino-acid chain: Glycine--tRNA ligase (445 aa).

Substrate is bound by residues lysine 97 and glutamate 145. ATP-binding positions include 177 to 179 (RNE), 187 to 192 (FRTCEF), 262 to 263 (EI), and 308 to 311 (GLTR). 192–196 (FEQME) serves as a coordination point for substrate. Substrate is bound at residue 304–308 (ETSLG).

This sequence belongs to the class-II aminoacyl-tRNA synthetase family. Homodimer.

The protein resides in the cytoplasm. The enzyme catalyses tRNA(Gly) + glycine + ATP = glycyl-tRNA(Gly) + AMP + diphosphate. In terms of biological role, catalyzes the attachment of glycine to tRNA(Gly). The polypeptide is Glycine--tRNA ligase (Borrelia hermsii (strain HS1 / DAH)).